A 472-amino-acid polypeptide reads, in one-letter code: tRNA-2-methylthio-N(6)-dimethylallyladenosine synthase (472 aa).

Residues 1 to 24 (MTGTPDVFPPATPGGAPLVALPAG) are disordered. Residues 33-150 (GKLYIKTHGC…LPELIRARRE (118 aa)) enclose the MTTase N-terminal domain. Positions 42, 79, 113, 187, 191, and 194 each coordinate [4Fe-4S] cluster. Residues 173 to 407 (RAEGASAFVS…RINAHAAGIS (235 aa)) enclose the Radical SAM core domain. The region spanning 408–471 (EKMVGTVQTV…TNSLRARVVA (64 aa)) is the TRAM domain.

Belongs to the methylthiotransferase family. MiaB subfamily. As to quaternary structure, monomer. [4Fe-4S] cluster is required as a cofactor.

The protein resides in the cytoplasm. The catalysed reaction is N(6)-dimethylallyladenosine(37) in tRNA + (sulfur carrier)-SH + AH2 + 2 S-adenosyl-L-methionine = 2-methylsulfanyl-N(6)-dimethylallyladenosine(37) in tRNA + (sulfur carrier)-H + 5'-deoxyadenosine + L-methionine + A + S-adenosyl-L-homocysteine + 2 H(+). In terms of biological role, catalyzes the methylthiolation of N6-(dimethylallyl)adenosine (i(6)A), leading to the formation of 2-methylthio-N6-(dimethylallyl)adenosine (ms(2)i(6)A) at position 37 in tRNAs that read codons beginning with uridine. This chain is tRNA-2-methylthio-N(6)-dimethylallyladenosine synthase, found in Stenotrophomonas maltophilia (strain K279a).